A 62-amino-acid polypeptide reads, in one-letter code: Large ribosomal subunit protein uL29 (62 aa).

This sequence belongs to the universal ribosomal protein uL29 family.

The sequence is that of Large ribosomal subunit protein uL29 from Amoebophilus asiaticus (strain 5a2).